The sequence spans 261 residues: Homeobox-leucine zipper protein HOX24 (261 aa).

Disordered stretches follow at residues 42 to 67 (AAAA…RKRR) and 160 to 188 (KLNE…NSVM). A compositionally biased stretch (gly residues) spans 46 to 61 (GRGGGDGDGGGGGGGG). The homeobox DNA-binding region spans 61 to 121 (GGERKRRFTE…NKRARWRSKQ (61 aa)). The interval 120–164 (KQIEHDYAALRAQYDALHARVESLRQEKLALADQVDELRGKLNER) is leucine-zipper.

This sequence belongs to the HD-ZIP homeobox family. Class I subfamily. As to expression, expressed in roots and panicles.

The protein localises to the nucleus. Probable transcription factor. This chain is Homeobox-leucine zipper protein HOX24 (HOX24), found in Oryza sativa subsp. japonica (Rice).